We begin with the raw amino-acid sequence, 473 residues long: Mitochondrial distribution and morphology protein 10 (473 aa).

Belongs to the MDM10 family. In terms of assembly, component of the ER-mitochondria encounter structure (ERMES) or MDM complex, composed of MMM1, MDM10, MDM12 and MDM34. Associates with the mitochondrial outer membrane sorting assembly machinery SAM(core) complex.

The protein localises to the mitochondrion outer membrane. In terms of biological role, component of the ERMES/MDM complex, which serves as a molecular tether to connect the endoplasmic reticulum and mitochondria. Components of this complex are involved in the control of mitochondrial shape and protein biogenesis and may function in phospholipid exchange. MDM10 is involved in the late assembly steps of the general translocase of the mitochondrial outer membrane (TOM complex). Functions in the TOM40-specific route of the assembly of outer membrane beta-barrel proteins, including the association of TOM40 with the receptor TOM22 and small TOM proteins. Can associate with the SAM(core) complex as well as the MDM12-MMM1 complex, both involved in late steps of the major beta-barrel assembly pathway, that is responsible for biogenesis of all outer membrane beta-barrel proteins. May act as a switch that shuttles between both complexes and channels precursor proteins into the TOM40-specific pathway. Plays a role in mitochondrial morphology and in the inheritance of mitochondria. The polypeptide is Mitochondrial distribution and morphology protein 10 (Candida albicans (strain SC5314 / ATCC MYA-2876) (Yeast)).